A 55-amino-acid polypeptide reads, in one-letter code: Large ribosomal subunit protein bL33 (55 aa).

It belongs to the bacterial ribosomal protein bL33 family.

The sequence is that of Large ribosomal subunit protein bL33 from Vibrio cholerae serotype O1 (strain ATCC 39541 / Classical Ogawa 395 / O395).